We begin with the raw amino-acid sequence, 209 residues long: Small ribosomal subunit protein uS4 (209 aa).

A compositionally biased stretch (basic residues) spans 1–13 (MSTKSRTRSKTRL). 2 disordered regions span residues 1–20 (MSTK…LGIP) and 28–49 (YLEK…QDSD). In terms of domain architecture, S4 RNA-binding spans 95-176 (QRLDALVVRS…PKLPSYLEVE (82 aa)).

It belongs to the universal ribosomal protein uS4 family. In terms of assembly, part of the 30S ribosomal subunit. Contacts protein S5. The interaction surface between S4 and S5 is involved in control of translational fidelity.

One of the primary rRNA binding proteins, it binds directly to 16S rRNA where it nucleates assembly of the body of the 30S subunit. In terms of biological role, with S5 and S12 plays an important role in translational accuracy. This Clavibacter michiganensis subsp. michiganensis (strain NCPPB 382) protein is Small ribosomal subunit protein uS4.